The primary structure comprises 147 residues: Large ribosomal subunit protein uL13 (147 aa).

The disordered stretch occupies residues 127 to 147; the sequence is GPEHPHSAQQPKVLEIQGAAR.

The protein belongs to the universal ribosomal protein uL13 family. As to quaternary structure, part of the 50S ribosomal subunit.

In terms of biological role, this protein is one of the early assembly proteins of the 50S ribosomal subunit, although it is not seen to bind rRNA by itself. It is important during the early stages of 50S assembly. The polypeptide is Large ribosomal subunit protein uL13 (Verminephrobacter eiseniae (strain EF01-2)).